The following is a 346-amino-acid chain: Tripartite motif-containing protein 44 (346 aa).

The tract at residues Thr-68–Pro-167 is disordered. Residues Glu-89–Pro-167 show a composition bias toward acidic residues. Residues Val-176–Leu-217 form a B box-type zinc finger. Zn(2+) contacts are provided by Cys-181, His-184, Cys-203, and His-209. The stretch at Ala-292–Glu-327 forms a coiled coil. Residues Ala-313–Thr-346 are disordered. A compositionally biased stretch (acidic residues) spans Gly-332 to Thr-346. Ser-338 and Ser-341 each carry phosphoserine.

As to quaternary structure, interacts (via coiled coil) with TRIM17 (via coiled coil). In terms of tissue distribution, expressed mainly in brain with high level in cerebral hemispheres and cerebellum. Lower expression in kidney, lung and spleen. In brain is detected in the hippocampus, thalamic and pretectal nuclei, substantia nigra, the dorsal part of the medulla, the cerebellum, in the olfactory nucleus, other cortical areas apart from hippocampus and the striatum. Indeed expression is confined in neuronal somata namely in the CA3 region and dentate gyrus of the hippocampus, caudate-putamen, parabranchial nucleus, olfactory nucleus, cortex, deep cerebellar nuclei and thalamus. Also highly expressed in the spleen. thymus and testis.

May play a role in the process of differentiation and maturation of neuronal cells. May regulate the activity of TRIM17. Is a negative regulator of PAX6 expression. This chain is Tripartite motif-containing protein 44 (Trim44), found in Mus musculus (Mouse).